A 217-amino-acid chain; its full sequence is ATP-binding protein BexA (217 aa).

An ABC transporter domain is found at 2–217 (IRVNNVCKKY…AYQYYNETQK (216 aa)). 38 to 45 (GRNGAGKS) contributes to the ATP binding site.

The protein belongs to the ABC transporter superfamily.

The protein resides in the cell inner membrane. Functionally, putative ATP-binding protein, and an energy-coupling component of capsule polysaccharide export apparatus. The chain is ATP-binding protein BexA (bexA) from Haemophilus influenzae.